The following is a 287-amino-acid chain: ATP synthase gamma chain (287 aa).

It belongs to the ATPase gamma chain family. F-type ATPases have 2 components, CF(1) - the catalytic core - and CF(0) - the membrane proton channel. CF(1) has five subunits: alpha(3), beta(3), gamma(1), delta(1), epsilon(1). CF(0) has three main subunits: a, b and c.

It is found in the cell inner membrane. Produces ATP from ADP in the presence of a proton gradient across the membrane. The gamma chain is believed to be important in regulating ATPase activity and the flow of protons through the CF(0) complex. The sequence is that of ATP synthase gamma chain from Geobacter sp. (strain M21).